The primary structure comprises 845 residues: Protein P (845 aa).

The terminal protein domain (TP) stretch occupies residues 1-179; it reads MPLSYQHFLK…FCGSPYSWEQ (179 aa). A spacer region spans residues 180–348; it reads ELHHGRLVTK…YCLSHLVNLL (169 aa). Disordered stretches follow at residues 188–211 and 288–317; these read TKTS…SRSS and YSHL…ARSQ. 2 stretches are compositionally biased toward polar residues: residues 199 to 211 and 290 to 301; these read VCSQ…SRSS and HLSTSKRQSSSG. Positions 349–692 are polymerase/reverse transcriptase domain (RT); it reads EDWGPCTDHG…YMNLYPVARQ (344 aa). A Reverse transcriptase domain is found at 359–602; that stretch reads EHHIRIPRTP…YSLNFMGYII (244 aa). Residues Asp-431, Asp-553, and Asp-554 each coordinate Mg(2+).

The protein belongs to the hepadnaviridae P protein family.

The catalysed reaction is DNA(n) + a 2'-deoxyribonucleoside 5'-triphosphate = DNA(n+1) + diphosphate. The enzyme catalyses Endonucleolytic cleavage to 5'-phosphomonoester.. Its activity is regulated as follows. Activated by host HSP70 and HSP40 in vitro to be able to bind the epsilon loop of the pgRNA. Because deletion of the RNase H region renders the protein partly chaperone-independent, the chaperones may be needed indirectly to relieve occlusion of the RNA-binding site by this domain. Inhibited by several reverse-transcriptase inhibitors: Lamivudine, Adefovir and Entecavir. Functionally, multifunctional enzyme that converts the viral RNA genome into dsDNA in viral cytoplasmic capsids. This enzyme displays a DNA polymerase activity that can copy either DNA or RNA templates, and a ribonuclease H (RNase H) activity that cleaves the RNA strand of RNA-DNA heteroduplexes in a partially processive 3'- to 5'-endonucleasic mode. Neo-synthesized pregenomic RNA (pgRNA) are encapsidated together with the P protein, and reverse-transcribed inside the nucleocapsid. Initiation of reverse-transcription occurs first by binding the epsilon loop on the pgRNA genome, and is initiated by protein priming, thereby the 5'-end of (-)DNA is covalently linked to P protein. Partial (+)DNA is synthesized from the (-)DNA template and generates the relaxed circular DNA (RC-DNA) genome. After budding and infection, the RC-DNA migrates in the nucleus, and is converted into a plasmid-like covalently closed circular DNA (cccDNA). The activity of P protein does not seem to be necessary for cccDNA generation, and is presumably released from (+)DNA by host nuclear DNA repair machinery. This is Protein P from Homo sapiens (Human).